The primary structure comprises 706 residues: Polyribonucleotide nucleotidyltransferase (706 aa).

Residues D487 and D493 each coordinate Mg(2+). Positions 553–612 (PRLFTMKINQDKIREVIGKGGETIRAITAETGTEINIAEDGTITIAATTQEAGDAAKKRI) constitute a KH domain. In terms of domain architecture, S1 motif spans 622–692 (GKVYEGTVVK…DRGRVRLSIK (71 aa)).

The protein belongs to the polyribonucleotide nucleotidyltransferase family. Mg(2+) is required as a cofactor.

It is found in the cytoplasm. The catalysed reaction is RNA(n+1) + phosphate = RNA(n) + a ribonucleoside 5'-diphosphate. Involved in mRNA degradation. Catalyzes the phosphorolysis of single-stranded polyribonucleotides processively in the 3'- to 5'-direction. This is Polyribonucleotide nucleotidyltransferase from Neisseria meningitidis serogroup A / serotype 4A (strain DSM 15465 / Z2491).